Reading from the N-terminus, the 236-residue chain is Eukaryotic translation initiation factor 3 subunit J (236 aa).

The tract at residues 1 to 65 (MADDWESAAD…APAKPKPNKA (65 aa)) is disordered. Positions 28 to 46 (GEDEDEDIKDSWEDEEEKK) are enriched in acidic residues. Over residues 47-58 (DEEKPTKTEAPA) the composition is skewed to basic and acidic residues.

This sequence belongs to the eIF-3 subunit J family. Component of the eukaryotic translation initiation factor 3 (eIF-3) complex. The eIF-3 complex interacts with pix.

It localises to the cytoplasm. Functionally, component of the eukaryotic translation initiation factor 3 (eIF-3) complex, which is involved in protein synthesis of a specialized repertoire of mRNAs and, together with other initiation factors, stimulates binding of mRNA and methionyl-tRNAi to the 40S ribosome. The eIF-3 complex specifically targets and initiates translation of a subset of mRNAs involved in cell proliferation. The chain is Eukaryotic translation initiation factor 3 subunit J from Drosophila melanogaster (Fruit fly).